The primary structure comprises 355 residues: 45 kDa calcium-binding protein (355 aa).

Residues 1-29 (MASRQAPLCGLAPCCLWLLGVVLLMNASA) form the signal peptide. Asn-33 carries N-linked (GlcNAc...) asparagine glycosylation. 2 EF-hand domains span residues 91 to 126 (KSRR…KTAE) and 130 to 165 (EAVA…TKGH). Position 92 is a phosphoserine (Ser-92). Ca(2+) contacts are provided by Asp-104, Asn-106, Asp-108, Arg-110, Glu-115, Asp-143, Asp-145, Asp-147, His-149, and Glu-154. 2 positions are modified to phosphothreonine: Thr-186 and Thr-210. EF-hand domains lie at 226-261 (MLQF…TVEN), 271-306 (WVRD…MNEF), and 307-342 (SALN…FTGS). Asp-239, Asp-241, Asp-243, Lys-245, and Glu-250 together coordinate Ca(2+). Thr-258 is subject to Phosphothreonine. Asp-284, Asn-286, and Asp-288 together coordinate Ca(2+). Thr-292 carries the phosphothreonine modification. The Ca(2+) site is built by Glu-295, Asp-320, Asn-322, Asn-324, Tyr-326, and Glu-331. The segment at 302-355 (PMNEFSALNEAKQMIAIADENQNHYLEPEEVLKYSEFFTGSKLVDYARSVHEEF) is necessary for intracellular retention in Golgi apparatus lumen.

It belongs to the CREC family.

It localises to the golgi apparatus lumen. May regulate calcium-dependent activities in the endoplasmic reticulum lumen or post-ER compartment. In Bos taurus (Bovine), this protein is 45 kDa calcium-binding protein (SDF4).